A 423-amino-acid polypeptide reads, in one-letter code: tRNA(Ile)-lysidine synthase (423 aa).

29-34 is an ATP binding site; sequence SGGKDS.

This sequence belongs to the tRNA(Ile)-lysidine synthase family.

It is found in the cytoplasm. The catalysed reaction is cytidine(34) in tRNA(Ile2) + L-lysine + ATP = lysidine(34) in tRNA(Ile2) + AMP + diphosphate + H(+). Its function is as follows. Ligates lysine onto the cytidine present at position 34 of the AUA codon-specific tRNA(Ile) that contains the anticodon CAU, in an ATP-dependent manner. Cytidine is converted to lysidine, thus changing the amino acid specificity of the tRNA from methionine to isoleucine. The chain is tRNA(Ile)-lysidine synthase from Lactococcus lactis subsp. lactis (strain IL1403) (Streptococcus lactis).